Reading from the N-terminus, the 141-residue chain is VLSANDKTNVKTVFTKITGHAEDYGAETLERMFITYPPTKTYFPHFDLHHGSAQIKAHGKKVVGALIEAVNHIDDIAGALSKLSDLHAQKLRVDPVNFKLLGQCFLVVVAIHHPSVLTPEVHASLDKFLCAVGNVLSAKYR.

The Globin domain occupies 1 to 141 (VLSANDKTNV…VGNVLSAKYR (141 aa)). Position 58 (His-58) interacts with O2. His-87 serves as a coordination point for heme b.

Belongs to the globin family. In terms of assembly, heterotetramer of two alpha chains and two beta chains. Red blood cells.

Its function is as follows. Involved in oxygen transport from the lung to the various peripheral tissues. The chain is Hemoglobin subunit alpha-A (HBAA) from Trigonoceps occipitalis (White-headed vulture).